The chain runs to 141 residues: Large ribosomal subunit protein uL16c (141 aa).

The span at 1–17 (MLSPRRTKYRKQHRGRL) shows a compositional bias: basic residues. The tract at residues 1–20 (MLSPRRTKYRKQHRGRLKGT) is disordered.

The protein belongs to the universal ribosomal protein uL16 family. Part of the 50S ribosomal subunit.

Its subcellular location is the plastid. The protein localises to the chloroplast. In Staurastrum punctulatum (Green alga), this protein is Large ribosomal subunit protein uL16c.